A 148-amino-acid chain; its full sequence is Deoxyuridine 5'-triphosphate nucleotidohydrolase (148 aa).

Residues 67–69, asparagine 80, 84–86, and methionine 94 contribute to the substrate site; these read RSG and LID.

This sequence belongs to the dUTPase family. Requires Mg(2+) as cofactor.

It carries out the reaction dUTP + H2O = dUMP + diphosphate + H(+). It functions in the pathway pyrimidine metabolism; dUMP biosynthesis; dUMP from dCTP (dUTP route): step 2/2. Functionally, this enzyme is involved in nucleotide metabolism: it produces dUMP, the immediate precursor of thymidine nucleotides and it decreases the intracellular concentration of dUTP so that uracil cannot be incorporated into DNA. The polypeptide is Deoxyuridine 5'-triphosphate nucleotidohydrolase (Burkholderia mallei (strain NCTC 10247)).